The following is a 407-amino-acid chain: Arginine biosynthesis bifunctional protein ArgJ (407 aa).

The substrate site is built by Thr-157, Lys-183, Thr-194, Glu-280, Asn-402, and Thr-407. Thr-194 serves as the catalytic Nucleophile.

The protein belongs to the ArgJ family. In terms of assembly, heterotetramer of two alpha and two beta chains.

The protein localises to the cytoplasm. It carries out the reaction N(2)-acetyl-L-ornithine + L-glutamate = N-acetyl-L-glutamate + L-ornithine. The enzyme catalyses L-glutamate + acetyl-CoA = N-acetyl-L-glutamate + CoA + H(+). Its pathway is amino-acid biosynthesis; L-arginine biosynthesis; L-ornithine and N-acetyl-L-glutamate from L-glutamate and N(2)-acetyl-L-ornithine (cyclic): step 1/1. It participates in amino-acid biosynthesis; L-arginine biosynthesis; N(2)-acetyl-L-ornithine from L-glutamate: step 1/4. Its function is as follows. Catalyzes two activities which are involved in the cyclic version of arginine biosynthesis: the synthesis of N-acetylglutamate from glutamate and acetyl-CoA as the acetyl donor, and of ornithine by transacetylation between N(2)-acetylornithine and glutamate. The sequence is that of Arginine biosynthesis bifunctional protein ArgJ from Bacillus cereus (strain ATCC 10987 / NRS 248).